Reading from the N-terminus, the 313-residue chain is Tyrosine recombinase slr0733 (313 aa).

The Core-binding (CB) domain occupies 7 to 101 (NNLSGLNQNI…AIKSLVNYAR (95 aa)). Residues 122–307 (RDTTGVSPTS…RHQHQAQITD (186 aa)) enclose the Tyr recombinase domain. Active-site residues include Arg-162, Lys-188, His-258, Arg-261, and His-285. Tyr-294 acts as the O-(3'-phospho-DNA)-tyrosine intermediate in catalysis.

Belongs to the 'phage' integrase family.

It localises to the cytoplasm. Site-specific tyrosine recombinase, which acts by catalyzing the cutting and rejoining of the recombining DNA molecules. This chain is Tyrosine recombinase slr0733, found in Synechocystis sp. (strain ATCC 27184 / PCC 6803 / Kazusa).